A 461-amino-acid chain; its full sequence is Proton extrusion protein PxcA (461 aa).

4 helical membrane-spanning segments follow: residues phenylalanine 244–valine 264, leucine 339–glycine 359, isoleucine 386–valine 406, and phenylalanine 421–isoleucine 441.

Belongs to the CemA family.

Its subcellular location is the cell inner membrane. Required for H(+) efflux immediately after light irradiation to form a rapid H(+) concentration gradient across the thylakoid membranes. Together with PxcL, contributes to transient H(+) uptake following dark to light transition. The sequence is that of Proton extrusion protein PxcA from Thermosynechococcus vestitus (strain NIES-2133 / IAM M-273 / BP-1).